The following is a 166-amino-acid chain: MFDGIGFMELLLIGVLGLVVLGPERLPVAVRSITSWIRAMKRMANSVKEELEQELKIEQLHADLKKAESKGLSNLSPELKESIEQLKQAAQSVNRPYQVQDPVKDTPAPENQIYSPVASTVQTSPAQASQANPTATVEASPAPASPATPSEPSQGADTRSNPKANG.

The helical transmembrane segment at 2-22 (FDGIGFMELLLIGVLGLVVLG) threads the bilayer. The disordered stretch occupies residues 69 to 166 (SKGLSNLSPE…DTRSNPKANG (98 aa)). Polar residues-rich tracts occupy residues 88-97 (QAAQSVNRPY) and 112-132 (QIYS…SQAN). A compositionally biased stretch (low complexity) spans 133–153 (PTATVEASPAPASPATPSEPS). Residues 155–166 (GADTRSNPKANG) show a composition bias toward polar residues.

The protein belongs to the TatB family. The Tat system comprises two distinct complexes: a TatABC complex, containing multiple copies of TatA, TatB and TatC subunits, and a separate TatA complex, containing only TatA subunits. Substrates initially bind to the TatABC complex, which probably triggers association of the separate TatA complex to form the active translocon.

The protein localises to the cell inner membrane. Functionally, part of the twin-arginine translocation (Tat) system that transports large folded proteins containing a characteristic twin-arginine motif in their signal peptide across membranes. Together with TatC, TatB is part of a receptor directly interacting with Tat signal peptides. TatB may form an oligomeric binding site that transiently accommodates folded Tat precursor proteins before their translocation. The sequence is that of Sec-independent protein translocase protein TatB from Shewanella baltica (strain OS155 / ATCC BAA-1091).